We begin with the raw amino-acid sequence, 311 residues long: Urease accessory protein UreD (311 aa).

The protein belongs to the UreD family. In terms of assembly, ureD, UreF and UreG form a complex that acts as a GTP-hydrolysis-dependent molecular chaperone, activating the urease apoprotein by helping to assemble the nickel containing metallocenter of UreC. The UreE protein probably delivers the nickel.

The protein localises to the cytoplasm. Its function is as follows. Required for maturation of urease via the functional incorporation of the urease nickel metallocenter. In Synechococcus sp. (strain CC9605), this protein is Urease accessory protein UreD.